We begin with the raw amino-acid sequence, 112 residues long: uncharacterized protein (112 aa).

Fe cation is bound by residues Cys-39, Cys-105, and Cys-107.

Belongs to the HesB/IscA family. Ycf83 subfamily.

Its subcellular location is the plastid. It localises to the chloroplast. This is an uncharacterized protein from Galdieria sulphuraria (Red alga).